A 223-amino-acid chain; its full sequence is MEDPAGRRVDYGDRRFDEHDLAPTPLAQFQAWYSDAVEAGVVEPNAMTVATAGADGVSARTVLLKAVDGRGFVFYTNQRSRKALAIAHDPRVALLFTWHGTHRQVAVRGTAEEVPRAETEAYFASRPYGSRIGAWVSEQSRTTPSAAALHEREAQLRERWPDTGSPDDVPTPPHWGGYLVRALEVEFWQGRTSRLHDRLVLVAADGPARLDDPAPWRTERRQP.

Residues 8–11 and lysine 65 each bind substrate; that span reads RVDY. Residues 60-65, 75-76, arginine 81, lysine 82, and glutamine 104 contribute to the FMN site; these read RTVLLK and YT. The substrate site is built by tyrosine 122, arginine 126, and serine 130. FMN contacts are provided by residues 139-140 and tryptophan 188; that span reads QS. 194–196 lines the substrate pocket; it reads RLH. Residue arginine 198 participates in FMN binding.

This sequence belongs to the pyridoxamine 5'-phosphate oxidase family. Homodimer. FMN is required as a cofactor.

It catalyses the reaction pyridoxamine 5'-phosphate + O2 + H2O = pyridoxal 5'-phosphate + H2O2 + NH4(+). It carries out the reaction pyridoxine 5'-phosphate + O2 = pyridoxal 5'-phosphate + H2O2. The protein operates within cofactor metabolism; pyridoxal 5'-phosphate salvage; pyridoxal 5'-phosphate from pyridoxamine 5'-phosphate: step 1/1. It functions in the pathway cofactor metabolism; pyridoxal 5'-phosphate salvage; pyridoxal 5'-phosphate from pyridoxine 5'-phosphate: step 1/1. Functionally, catalyzes the oxidation of either pyridoxine 5'-phosphate (PNP) or pyridoxamine 5'-phosphate (PMP) into pyridoxal 5'-phosphate (PLP). The polypeptide is Pyridoxine/pyridoxamine 5'-phosphate oxidase (Kineococcus radiotolerans (strain ATCC BAA-149 / DSM 14245 / SRS30216)).